We begin with the raw amino-acid sequence, 95 residues long: Co-chaperonin GroES (95 aa).

It belongs to the GroES chaperonin family. Heptamer of 7 subunits arranged in a ring. Interacts with the chaperonin GroEL.

The protein localises to the cytoplasm. In terms of biological role, together with the chaperonin GroEL, plays an essential role in assisting protein folding. The GroEL-GroES system forms a nano-cage that allows encapsulation of the non-native substrate proteins and provides a physical environment optimized to promote and accelerate protein folding. GroES binds to the apical surface of the GroEL ring, thereby capping the opening of the GroEL channel. This Cereibacter sphaeroides (strain ATCC 17025 / ATH 2.4.3) (Rhodobacter sphaeroides) protein is Co-chaperonin GroES.